A 185-amino-acid polypeptide reads, in one-letter code: Ribosome-recycling factor (185 aa).

Belongs to the RRF family.

The protein resides in the cytoplasm. Its function is as follows. Responsible for the release of ribosomes from messenger RNA at the termination of protein biosynthesis. May increase the efficiency of translation by recycling ribosomes from one round of translation to another. In Azotobacter vinelandii (strain DJ / ATCC BAA-1303), this protein is Ribosome-recycling factor.